We begin with the raw amino-acid sequence, 2026 residues long: MSNRPNSNPGGSLRRSQRNTAAAQPIDHTLAGRNSLSLSVGSLSIPDPDLEAAGTSGQQGRREGSSTRALKRSSVSEPNITFSPSPAKRPKVVSSHFSDSSASGPSAPAISPEVTEPRKAPASVSTKSKKRRLAAEPAPARALSKKSSSYPGPSGASSTPSQKRKKADATLLSSSSSSSLPSSSSAAGPLPPRSEASRAAKPTKLASKSAASAKAGCSTVTDSSSSSASSSSSSSSSSSAATGTNSCAPQGARLKQGKDQSKARRSRSASSPSPRRSSRDKEQSKAAGSSKFDWASRFNSKVNLPKPKLSLPGSAKAETSSKPGPSGLQAKLASLRKSTKKRSESPPAELPSCRRSTRQKTTGSCASTSRRGSGLGKRGAAEARRQEKMADSDNNQDGANSSAARTEETPQGASASSSVAGAVGMTTSGESESDDSEMGRLQALLEARGLPPHLFGPFGPRMSQLFHRTIGSGASSKAQQLLQGLQATGDESQQLQAAIEMCQLLVMGNEETLGGFPVKSVVPALITLLQMEHNFDIMNHASRALTYMMEALPRSSAVVVDAIPVFLEKLQVIQFIDVAEQALTALEMLSRRHSKAILQAGGLADCLLYLEFFSINAQRNALAIAANCCQSITPDEFHFVADSLPLLTQRLTHQDKKSVESTCLCFARLVDNFQHEENLLQQVASRDLLTNIQQLLVLTPPVLSSGMFIMVVRMFSLMCSNCPCLAVQLMKQNIAETLRFLLCGASNGSCQEQIDLVPRSPQELYELTSLICELMPCLPREGIFAVDAMLKKGSAQTTEGAIWQWRDDRGLWHPYNRIDSRIIEQINEDTGTARAIQRKPNPLANPNTGGHLEVRREDARAQLMKEDPELAKCFIKTLFGVLYEVYSSSAGPAVRHKCLRAILRIIYFADAELLKDVLRNHAVSSHIASMLSSQDLKIVVGSLQMAEILMQKLPDVFSVYFRREGVMHQVKNLAESEVFLTSPPKACTSGTASLCTTTITTATTTAASNVTPDLGSPSFQHSMDDSLDLSPQGRLSDVLKRKRLPKRGPRRPKYSPPRDDDKVDNQAKSPTTTQSPKSSFLASLNPKTWGKLGTQANSANSEPSRTAGVSGLARVPPKDSVSNNRDKIKAWIKEQASKFVERYFNSESVDGSNPALNVLQRLCTATEQLNLQMDSGVECLEEISSIVSESDVSSFEIQHSGLVKQLLLYLTSNSERDTISRDERIKRFLHVFFGCPIPGQEPPGRLDPTENGPLLALVHKMNNCLSQMEQFPVKVHDFPSGNGNGSRGSQALKFFNTHQLKCQLQRHPDCTNVKQWKGGPVKIDPLALVQAIERYLVVRGYGRIREEDEDSDDDGSDDEIDESLAAQFLNSGSVRHRLQFYIGEHLLPYNMTVYQAVRQFSLQAEEERESTDDEANPLGRAGIWTKTHTVWYKPVREDEEGCKDAVGGKRGRAQTAPTKTSPRNAKKQDELWHEGVCPSVANPLETYLICDPPEGITFDDPSMEVILLLRVLHSISRYWFYLYDNAACKEIIPTGEFINSKLTAKANRQLQDPLVIMTGNIPTWLTELGKTCPFFFPFDTRQMLFYVTAFDRDRAMQRLLDTNPEINQSDSQDSRVAPRLDRKKRTINRDELLKQAESVMQDLGSSRAMLEIQYENEVGTGLGPTQEFYALVSQELQRADLGLWRGEEVTLSNPKGSQEGTKYMFSSRGLFAVPFGRTTKPAHIAKIKMKFRFLGKLMAKAIMDFRLLDLPLGLPFYKWMLRHESSISSHDLVNIDPGVAKSIQHLEDIIRQKKRIEQDRSHTRETLQQALESLNMNGCSVEDLGLDFTLPGFPNIELKKGGKDVPVTIHNLEDYLRLVVYWTLNEGVLRQFESFREGFESVFPLHHLQYFYPEELDQLLCGSKSESWDVKTLMECCRPDHGYTHDSRAVRFLFEVLSSFDAEQQRLFLQFVTGSPRLPVGGFRSLNPPLTIVRKTFESTENPDDFLPSVMTCVNYLKLPDYSSIEIMREKLLIAAREGQQSFHLS.

Composition is skewed to polar residues over residues 1–10 (MSNRPNSNPG), 32–42 (GRNSLSLSVGS), and 73–84 (SSVSEPNITFSP). The disordered stretch occupies residues 1 to 437 (MSNRPNSNPG…SGESESDDSE (437 aa)). Low complexity-rich tracts occupy residues 94 to 112 (SSHF…AISP), 135 to 161 (AEPA…STPS), 171 to 188 (LLSS…SAAG), and 199 to 241 (AAKP…SSAA). Polar residues predominate over residues 359-371 (QKTTGSCASTSRR). Over residues 379–391 (GAAEARRQEKMAD) the composition is skewed to basic and acidic residues. The span at 392–404 (SDNNQDGANSSAA) shows a compositional bias: polar residues. Low complexity predominate over residues 412–430 (GASASSSVAGAVGMTTSGE). The WWE domain occupies 789–876 (MLKKGSAQTT…DPELAKCFIK (88 aa)). Disordered stretches follow at residues 1008 to 1123 (SNVT…SVSN) and 1441 to 1470 (GCKD…KQDE). Residues 1040 to 1053 (KRKRLPKRGPRRPK) are compositionally biased toward basic residues. Residues 1056 to 1065 (PPRDDDKVDN) are compositionally biased toward basic and acidic residues. The span at 1068 to 1079 (KSPTTTQSPKSS) shows a compositional bias: low complexity. A compositionally biased stretch (polar residues) spans 1094 to 1104 (TQANSANSEPS). Residues 1530–1604 (EIIPTGEFIN…AMQRLLDTNP (75 aa)) are K-box. The region spanning 1919–2026 (PDHGYTHDSR…REGQQSFHLS (108 aa)) is the HECT domain. The Glycyl thioester intermediate role is filled by Cys-1993.

This sequence belongs to the UPL family. K-HECT subfamily.

Its subcellular location is the nucleus. The protein localises to the nucleoplasm. It catalyses the reaction S-ubiquitinyl-[E2 ubiquitin-conjugating enzyme]-L-cysteine + [acceptor protein]-L-lysine = [E2 ubiquitin-conjugating enzyme]-L-cysteine + N(6)-ubiquitinyl-[acceptor protein]-L-lysine.. It participates in protein modification; protein ubiquitination. In terms of biological role, E3 ubiquitin-protein ligase involved in ubiquitin fusion degradation (UFD) pathway and regulation of DNA repair. Part of the ubiquitin fusion degradation (UFD) pathway, a process that mediates ubiquitination of protein at their N-terminus, regardless of the presence of lysine residues in target proteins. Acts as a key regulator of DNA damage response by acting as a suppressor of RNF168, an E3 ubiquitin-protein ligase that promotes accumulation of 'Lys-63'-linked histone H2A and H2AX at DNA damage sites, thereby acting as a guard against excessive spreading of ubiquitinated chromatin at damaged chromosomes. This chain is E3 ubiquitin-protein ligase TRIP12 (trip12), found in Danio rerio (Zebrafish).